Reading from the N-terminus, the 208-residue chain is Imidazole glycerol phosphate synthase subunit HisH (208 aa).

Residues 1-206 (MIVIIDYDTG…KEVTESCKSS (206 aa)) enclose the Glutamine amidotransferase type-1 domain. Catalysis depends on cysteine 79, which acts as the Nucleophile. Residues histidine 181 and glutamate 183 contribute to the active site.

As to quaternary structure, heterodimer of HisH and HisF.

Its subcellular location is the cytoplasm. The catalysed reaction is 5-[(5-phospho-1-deoxy-D-ribulos-1-ylimino)methylamino]-1-(5-phospho-beta-D-ribosyl)imidazole-4-carboxamide + L-glutamine = D-erythro-1-(imidazol-4-yl)glycerol 3-phosphate + 5-amino-1-(5-phospho-beta-D-ribosyl)imidazole-4-carboxamide + L-glutamate + H(+). It catalyses the reaction L-glutamine + H2O = L-glutamate + NH4(+). It functions in the pathway amino-acid biosynthesis; L-histidine biosynthesis; L-histidine from 5-phospho-alpha-D-ribose 1-diphosphate: step 5/9. Its function is as follows. IGPS catalyzes the conversion of PRFAR and glutamine to IGP, AICAR and glutamate. The HisH subunit catalyzes the hydrolysis of glutamine to glutamate and ammonia as part of the synthesis of IGP and AICAR. The resulting ammonia molecule is channeled to the active site of HisF. The chain is Imidazole glycerol phosphate synthase subunit HisH from Listeria innocua serovar 6a (strain ATCC BAA-680 / CLIP 11262).